Reading from the N-terminus, the 396-residue chain is Actin-related protein 6 (396 aa).

This sequence belongs to the actin family. ARP6 subfamily. As to quaternary structure, interacts with CBX1 and CBX3.

It is found in the cytoplasm. Its subcellular location is the cytoskeleton. The protein resides in the nucleus. The protein localises to the nucleolus. Required for formation and/or maintenance of the proper nucleolar structure and function. Plays a dual role in the regulation of ribosomal DNA (rDNA) transcription. In the presence of high glucose, it maintains active rDNA transcription through H2A.Z deposition and under glucose starvation, is required for the repression of rDNA transcription, and this function may be independent of H2A.Z. This chain is Actin-related protein 6 (ACTR6), found in Gallus gallus (Chicken).